Consider the following 464-residue polypeptide: Argininosuccinate lyase (464 aa).

This sequence belongs to the lyase 1 family. Argininosuccinate lyase subfamily.

It is found in the cytoplasm. The catalysed reaction is 2-(N(omega)-L-arginino)succinate = fumarate + L-arginine. It functions in the pathway amino-acid biosynthesis; L-arginine biosynthesis; L-arginine from L-ornithine and carbamoyl phosphate: step 3/3. The chain is Argininosuccinate lyase from Pseudomonas putida (strain W619).